A 497-amino-acid chain; its full sequence is Aluminum-activated malate transporter 10 (497 aa).

A run of 6 helical transmembrane segments spans residues 66–86 (KVVHCLKVGLALSLVSIFYYM), 88–108 (PLYDGVGGNAMWAIMTVVVVF), 123–143 (VVATILAGSLGIAVHWVATQS), 148–168 (VFVIGCSVFLFAFAATYSRFV), 173–193 (ARFDYGAMIFILTFSLVSVGG), and 210–230 (IAIGTSICIIITVFFCPIWAG). Disordered stretches follow at residues 413-437 (PIETNKPEEVPSEEENKVDSEERTT) and 476-497 (DFEQDSKKKTGDNNTKQPPLSS). Over residues 417–436 (NKPEEVPSEEENKVDSEERT) the composition is skewed to basic and acidic residues. The span at 487–497 (DNNTKQPPLSS) shows a compositional bias: polar residues.

This sequence belongs to the aromatic acid exporter (TC 2.A.85) family.

The protein localises to the membrane. Its function is as follows. Malate transporter. The polypeptide is Aluminum-activated malate transporter 10 (ALMT10) (Arabidopsis thaliana (Mouse-ear cress)).